The primary structure comprises 325 residues: Tyrosine phosphatase H2 (325 aa).

The 269-residue stretch at 27 to 295 (VTREHEKIMA…FFCYRVMERY (269 aa)) folds into the Tyrosine-protein phosphatase domain. Cys236 (phosphocysteine intermediate) is an active-site residue.

Belongs to the protein-tyrosine phosphatase family.

Its subcellular location is the host cytoplasm. It carries out the reaction O-phospho-L-tyrosyl-[protein] + H2O = L-tyrosyl-[protein] + phosphate. Suppresses host immune cell adhesion and phagocytosis. Triggers host mitochondrial membrane depolarization and caspase-dependent apoptosis. The protein is Tyrosine phosphatase H2 (H2) of Microplitis demolitor bracovirus (isolate Webb) (MdBV).